Here is a 206-residue protein sequence, read N- to C-terminus: Uridine kinase (206 aa).

Position 11–18 (11–18 (GGSGSGKT)) interacts with ATP.

Belongs to the uridine kinase family.

The protein localises to the cytoplasm. It carries out the reaction uridine + ATP = UMP + ADP + H(+). It catalyses the reaction cytidine + ATP = CMP + ADP + H(+). It participates in pyrimidine metabolism; CTP biosynthesis via salvage pathway; CTP from cytidine: step 1/3. The protein operates within pyrimidine metabolism; UMP biosynthesis via salvage pathway; UMP from uridine: step 1/1. In Macrococcus caseolyticus (strain JCSC5402) (Macrococcoides caseolyticum), this protein is Uridine kinase.